Here is a 479-residue protein sequence, read N- to C-terminus: Anaerobic nitric oxide reductase flavorubredoxin (479 aa).

A zinc metallo-hydrolase region spans residues 30–210; that stretch reads LRGSSYNSYL…PFSRLVTPKI (181 aa). Residues H79, E81, D83, H147, D166, and H227 each coordinate Fe cation. One can recognise a Flavodoxin-like domain in the interval 254 to 393; it reads ITIFYDTMSN…LCREHGREIA (140 aa). Residues 260 to 264 and 342 to 369 each bind FMN; these read TMSNN and AFGS…EMSL. A Rubredoxin-like domain is found at 423 to 474; that stretch reads GPRMQCSVCQWIYDPAKGEPMQDVAPGTPWSEVPDNFLCPECSLGKDVFDEL. Fe cation contacts are provided by C428, C431, C461, and C464.

In the N-terminal section; belongs to the zinc metallo-hydrolase group 3 family. Homotetramer. It depends on Fe cation as a cofactor. FMN serves as cofactor.

Its subcellular location is the cytoplasm. The protein operates within nitrogen metabolism; nitric oxide reduction. In terms of biological role, anaerobic nitric oxide reductase; uses NADH to detoxify nitric oxide (NO), protecting several 4Fe-4S NO-sensitive enzymes. Has at least 2 reductase partners, only one of which (NorW, flavorubredoxin reductase) has been identified. NO probably binds to the di-iron center; electrons enter from the NorW at rubredoxin and are transferred sequentially to the FMN center and the di-iron center. Also able to function as an aerobic oxygen reductase. In Escherichia coli O6:H1 (strain CFT073 / ATCC 700928 / UPEC), this protein is Anaerobic nitric oxide reductase flavorubredoxin.